Consider the following 383-residue polypeptide: Omega-6 fatty acid desaturase, endoplasmic reticulum isozyme 2 (383 aa).

3 helical membrane passes run 61 to 81, 85 to 105, and 117 to 137; these read TIAFCLYYVATHYFHLLPGPL, GMAIYWAVQGCILTGVWVIAH, and LLDDIVGLILHSALLVPYFSW. A Histidine box-1 motif is present at residues 105–109; that stretch reads HECGH. The short motif at 141–145 is the Histidine box-2 element; sequence HRRHH. A run of 3 helical transmembrane segments spans residues 179-199, 225-245, and 249-269; these read VLTLAVTLTLGWPLYLALNVS, IYISDAGVLAVVYGLFRLAMA, and AWVVCVYGVPLLVVNGFLVLI. The Histidine box-3 signature appears at 315–319; the sequence is HVAHH.

The protein belongs to the fatty acid desaturase type 1 family.

The protein localises to the endoplasmic reticulum membrane. The protein operates within lipid metabolism; polyunsaturated fatty acid biosynthesis. Its function is as follows. ER (microsomal) omega-6 fatty acid desaturase introduces the second double bond in the biosynthesis of 18:3 fatty acids, important constituents of plant membranes. It is thought to use cytochrome b5 as an electron donor and to act on fatty acids esterified to phosphatidylcholine and, possibly, other phospholipids. This Glycine max (Soybean) protein is Omega-6 fatty acid desaturase, endoplasmic reticulum isozyme 2 (FAD2-2).